The sequence spans 435 residues: uncharacterized protein (435 aa).

Serine 47 is subject to Phosphoserine. 2 disordered regions span residues 174–210 (LKKKKESIKTAQTTEAQGADHNEEDEEDEEDEEDDED) and 290–372 (KAEA…EDNK). Positions 195 to 210 (NEEDEEDEEDEEDDED) are enriched in acidic residues. Positions 290–304 (KAEATGEAHSKDVSA) are enriched in basic and acidic residues. A compositionally biased stretch (polar residues) spans 308-318 (SANTTTSFDET). 2 stretches are compositionally biased toward basic and acidic residues: residues 322 to 340 (EDEKPKSEGAEEESKKEAN) and 347 to 361 (VADRKEDLKSNKVND).

Its subcellular location is the cytoplasm. This is an uncharacterized protein from Saccharomyces cerevisiae (strain ATCC 204508 / S288c) (Baker's yeast).